The sequence spans 115 residues: NADH-ubiquinone oxidoreductase chain 3 (115 aa).

The next 3 membrane-spanning stretches (helical) occupy residues 3-23 (LIMT…IAFW), 55-75 (FFLV…LLPL), and 84-104 (LTTM…SLAY).

The protein belongs to the complex I subunit 3 family. As to quaternary structure, core subunit of respiratory chain NADH dehydrogenase (Complex I) which is composed of 45 different subunits. Interacts with TMEM186. Interacts with TMEM242.

It is found in the mitochondrion inner membrane. It catalyses the reaction a ubiquinone + NADH + 5 H(+)(in) = a ubiquinol + NAD(+) + 4 H(+)(out). Core subunit of the mitochondrial membrane respiratory chain NADH dehydrogenase (Complex I) which catalyzes electron transfer from NADH through the respiratory chain, using ubiquinone as an electron acceptor. Essential for the catalytic activity of complex I. In Ailurus fulgens (Himalayan red panda), this protein is NADH-ubiquinone oxidoreductase chain 3.